The sequence spans 817 residues: Verprolin (817 aa).

Positions 1-15 (MAGAPAPPPPPPPPA) are enriched in pro residues. A disordered region spans residues 1–752 (MAGAPAPPPP…THTNQPDVDV (752 aa)). A WH2 1 domain is found at 30-47 (GRDALLGDIRKGMKLKKA). Over residues 37–51 (DIRKGMKLKKAETND) the composition is skewed to basic and acidic residues. A compositionally biased stretch (low complexity) spans 62–79 (VSSASGSSGTVSSKGPSM). Residues 87–106 (MGAPQLGDILAGGIPKLKHI) form the WH2 2 domain. A glycan (N-linked (GlcNAc...) asparagine) is linked at Asn109. The span at 119–180 (SAPPIPGAVP…VPSSPAPPLP (62 aa)) shows a compositional bias: pro residues. The N-linked (GlcNAc...) asparagine glycan is linked to Asn212. Pro residues predominate over residues 236–245 (PQAPPPPPTP). Polar residues predominate over residues 254–265 (IKPTDNAVSPPS). A compositionally biased stretch (pro residues) spans 306 to 335 (SQPPLPSSAPPIPTSHAPPLPPTAPPPPSL). Over residues 336-348 (PNVTSAPKKATSA) the composition is skewed to low complexity. Residue Asn337 is glycosylated (N-linked (GlcNAc...) asparagine). The segment covering 372–382 (PVPPTLAPPLP) has biased composition (pro residues). An N-linked (GlcNAc...) asparagine glycan is attached at Asn383. Residues 383-395 (NTTSVPPNKASSM) show a composition bias toward low complexity. Over residues 396-407 (PAPPPPPPPPPG) the composition is skewed to pro residues. Residues 408–422 (AFSTSSALSASSIPL) show a composition bias toward low complexity. Pro residues predominate over residues 423-432 (APLPPPPPPS). Positions 447 to 469 (LTTNKPSASSKQSKISSSSSSSA) are enriched in low complexity. The span at 502–516 (DKQEDVIGSSKDDNV) shows a compositional bias: basic and acidic residues. Positions 518 to 534 (PSPISPSINPPKQSSQN) are enriched in low complexity. A Phosphoserine modification is found at Ser519. Residues 557–579 (APPPHTDAMAPPLPPSAPPPPIT) show a composition bias toward pro residues. Residues 588–597 (GDDHTNDKSE) show a composition bias toward basic and acidic residues. Positions 649-661 (PPSPPVAAAPPLP) are enriched in pro residues. Positions 713–737 (MDTGTSNSPSKNLKQRLFSTGGSTL) are enriched in polar residues. Position 762 is a phosphoserine (Ser762). Asn784 and Asn796 each carry an N-linked (GlcNAc...) asparagine glycan. A disordered region spans residues 786–806 (SQMPKPRPFQNKTKLYPSGKG).

This sequence belongs to the verprolin family. In terms of processing, N-glycosylated.

Its subcellular location is the cytoplasm. The protein localises to the cytoskeleton. Its function is as follows. Involved in cytoskeletal organization and cellular growth. May exert its effects on the cytoskeleton directly, or indirectly via proline-binding proteins (e.g. profilin) or proteins possessing SH3 domains. This chain is Verprolin (VRP1), found in Saccharomyces cerevisiae (strain ATCC 204508 / S288c) (Baker's yeast).